We begin with the raw amino-acid sequence, 345 residues long: Fibronectin type 3 and ankyrin repeat domains protein 1 (345 aa).

A Fibronectin type-III domain is found at 8–108 (PPSKPHPPVV…LVSVSTTREP (101 aa)). ANK repeat units follow at residues 109-139 (ISSE…KVDV), 143-172 (FGFT…DVNL), 176-205 (SGKD…SWQA), 209-238 (GGCT…EVDV), 243-273 (SGWT…NVNV), and 277-306 (NGKT…DASV).

Interacts with COPS5; regulates the phosphorylation of JUN and the transcriptional activity of AP-1. Interacts with RYBP; may prevent the ubiquitin-mediated proteasomal degradation of FANK1. In terms of processing, polyubiquitinated. Polyubiquitination leads to proteasomal degradation. Mostly restricted to testis.

The protein localises to the nucleus. It is found in the cytoplasm. Its subcellular location is the cytosol. The protein resides in the cytoskeleton. It localises to the cilium basal body. The protein localises to the cell projection. It is found in the cilium. In terms of biological role, through the activation of JUN and AP-1-mediated transcription, may regulate apoptosis. This is Fibronectin type 3 and ankyrin repeat domains protein 1 from Homo sapiens (Human).